Reading from the N-terminus, the 193-residue chain is Probable GTP-binding protein EngB (193 aa).

One can recognise an EngB-type G domain in the interval 24 to 193 (NIPEIALAGR…ELKAALAELL (170 aa)). GTP is bound by residues 32–39 (GRSNVGKS), 59–63 (GKTRT), 77–80 (DLPG), 144–147 (TKAD), and 174–176 (FSA). 2 residues coordinate Mg(2+): serine 39 and threonine 61.

The protein belongs to the TRAFAC class TrmE-Era-EngA-EngB-Septin-like GTPase superfamily. EngB GTPase family. Requires Mg(2+) as cofactor.

Necessary for normal cell division and for the maintenance of normal septation. The protein is Probable GTP-binding protein EngB of Syntrophomonas wolfei subsp. wolfei (strain DSM 2245B / Goettingen).